The following is a 101-amino-acid chain: Ribonuclease P protein component 1 (101 aa).

Belongs to the eukaryotic/archaeal RNase P protein component 1 family. Consists of a catalytic RNA component and at least 4-5 protein subunits.

The protein resides in the cytoplasm. It catalyses the reaction Endonucleolytic cleavage of RNA, removing 5'-extranucleotides from tRNA precursor.. Functionally, part of ribonuclease P, a protein complex that generates mature tRNA molecules by cleaving their 5'-ends. The sequence is that of Ribonuclease P protein component 1 from Methanococcoides burtonii (strain DSM 6242 / NBRC 107633 / OCM 468 / ACE-M).